The chain runs to 269 residues: Formamidopyrimidine-DNA glycosylase (269 aa).

The Schiff-base intermediate with DNA role is filled by P2. The Proton donor role is filled by E3. Catalysis depends on K57, which acts as the Proton donor; for beta-elimination activity. DNA contacts are provided by H90, R109, and K150. Residues 235 to 269 form an FPG-type zinc finger; it reads QVYGRAGELCRRCGNVIEIAKHGQRSTFFCRHCQH. The active-site Proton donor; for delta-elimination activity is R259.

Belongs to the FPG family. As to quaternary structure, monomer. The cofactor is Zn(2+).

The catalysed reaction is Hydrolysis of DNA containing ring-opened 7-methylguanine residues, releasing 2,6-diamino-4-hydroxy-5-(N-methyl)formamidopyrimidine.. It catalyses the reaction 2'-deoxyribonucleotide-(2'-deoxyribose 5'-phosphate)-2'-deoxyribonucleotide-DNA = a 3'-end 2'-deoxyribonucleotide-(2,3-dehydro-2,3-deoxyribose 5'-phosphate)-DNA + a 5'-end 5'-phospho-2'-deoxyribonucleoside-DNA + H(+). In terms of biological role, involved in base excision repair of DNA damaged by oxidation or by mutagenic agents. Acts as a DNA glycosylase that recognizes and removes damaged bases. Has a preference for oxidized purines, such as 7,8-dihydro-8-oxoguanine (8-oxoG). Has AP (apurinic/apyrimidinic) lyase activity and introduces nicks in the DNA strand. Cleaves the DNA backbone by beta-delta elimination to generate a single-strand break at the site of the removed base with both 3'- and 5'-phosphates. The sequence is that of Formamidopyrimidine-DNA glycosylase from Yersinia enterocolitica serotype O:8 / biotype 1B (strain NCTC 13174 / 8081).